The sequence spans 86 residues: Small ribosomal subunit protein bS16 (86 aa).

This sequence belongs to the bacterial ribosomal protein bS16 family.

The polypeptide is Small ribosomal subunit protein bS16 (Legionella pneumophila (strain Paris)).